A 411-amino-acid chain; its full sequence is Citrate synthase (411 aa).

Active-site residues include His-304 and Asp-363.

This sequence belongs to the citrate synthase family.

The catalysed reaction is oxaloacetate + acetyl-CoA + H2O = citrate + CoA + H(+). Its pathway is carbohydrate metabolism; tricarboxylic acid cycle; isocitrate from oxaloacetate: step 1/2. This chain is Citrate synthase (gltA), found in Rickettsia helvetica.